The following is a 130-amino-acid chain: Sulfurtransferase TusD (130 aa).

The Cysteine persulfide intermediate role is filled by cysteine 80.

The protein belongs to the DsrE/TusD family. In terms of assembly, heterohexamer, formed by a dimer of trimers. The hexameric TusBCD complex contains 2 copies each of TusB, TusC and TusD. The TusBCD complex interacts with TusE.

The protein resides in the cytoplasm. In terms of biological role, part of a sulfur-relay system required for 2-thiolation of 5-methylaminomethyl-2-thiouridine (mnm(5)s(2)U) at tRNA wobble positions. Accepts sulfur from TusA and transfers it in turn to TusE. The chain is Sulfurtransferase TusD from Proteus mirabilis (strain HI4320).